The chain runs to 467 residues: Prenyltransferase GME11375 (467 aa).

Glu-93 contacts L-tryptophan. Positions 108, 196, 198, 266, 268, and 436 each coordinate dimethylallyl diphosphate.

Belongs to the tryptophan dimethylallyltransferase family.

It participates in secondary metabolite biosynthesis. Its function is as follows. Prenyltransferase; part of the gene cluster that mediates the biosynthesis of dibenzodioxocinones such as pestalotiollide B, a novel class of inhibitors against cholesterol ester transfer protein (CEPT). The biosynthesis initiates from condensation of acetate and malonate units catalyzed by the non-reducing PKS pks8/GME11356. Pks8/GME11356 lacks a thioesterase (TE) domain, which is important to the cyclizing of the third ring of atrochrysone carboxylic acid, and the esterase GME11355 might play the role of TE and catalyzes the cyclization reaction of the C ring. The lactamase-like protein GME11357 (or other beta-lactamases in Pestalotiopsis microspora) probably hydrolyzes the thioester bond between the ACP of pks8/GME11356 and the intermediate to release atrochrysone carboxylic acid, which is spontaneously dehydrates to form endocrocin anthrone. Endocrocin anthrone is further converted to emodin via the endocrocin intermediate. Emodin is then oxidized by several enzymes such as the Baeyer-Villiger oxidase GME11358, the oxidoreductase GME11367, the short chain dehydrogenase/reductase GME11373, as well as by other oxidoreductases from the cluster, to modify the A and C rings and open the B ring, and finally yield monodictyphenone. The prenyltransferase GME11375 may catalyze the addition reaction between the C5 side chains and the carbon bone of dibenzodioxocinones. The remaining biochemical reactions to the final product dibenzodioxocinones should be methylation catalyzed by methyltransferase GME11366 and reduction and lactonization reaction catalyzed by a series of oxidordeuctases. This Pestalotiopsis microspora protein is Prenyltransferase GME11375.